We begin with the raw amino-acid sequence, 37 residues long: Potassium channel toxin alpha-KTx 2.19 (37 aa).

3 cysteine pairs are disulfide-bonded: C7–C28, C13–C33, and C17–C35.

In terms of tissue distribution, expressed by the venom gland.

It localises to the secreted. In terms of biological role, inhibitor of voltage-gated potassium channels. The sequence is that of Potassium channel toxin alpha-KTx 2.19 from Rhopalurus junceus (Caribbean blue scorpion).